A 479-amino-acid chain; its full sequence is Transcription factor CP2-like protein 1 (479 aa).

The segment at 1-52 (MLFWHTQPEHYNQHNSGSYLRDVLALPIFKQEEPQLSPENGARLPPLQYVLC) is mediate transcriptional repression. The Grh/CP2 DB domain occupies 43–280 (RLPPLQYVLC…PSPSYNGSPN (238 aa)). Disordered regions lie at residues 219 to 248 (KPKGADRKQKTDREKMEKRTAQEKEKYQPS) and 260 to 301 (WPDV…LPLG). The segment covering 221–245 (KGADRKQKTDREKMEKRTAQEKEKY) has biased composition (basic and acidic residues). An SAM2-like domain region spans residues 261–365 (PDVPYQANNT…IRLFNAIKGR (105 aa)). Residues 266 to 292 (QANNTPSPSYNGSPNSFGLREGNSSPN) show a composition bias toward polar residues.

It belongs to the grh/CP2 family. CP2 subfamily. In terms of assembly, forms homohexamers via its SAM-like domain. Interacts with Mta1; which is indispensable for Tfcp2l1-mediated self-renewal-promoting effect and endoderm-inhibiting action. As to expression, highly expressed in placenta, testis, small intestine, kidney and stomach. Low levels of expression in lung, mesenteric lymph nodes, muscle, ovary, and thymus. No expression was detected in brain, heart, liver, and spleen. Expressed in eccrine glands in the palm. Expression is prominent in both kidney collecting ducts intercalated (IC) and principal (PC) cells. Also expressed in the thick limb of Henle and connecting segments of the nephron.

The protein resides in the nucleus. Transcription factor that facilitates establishment and maintenance of pluripotency in embryonic stem cells (ESCs). With Klf2, acts as the major effector of self-renewal that mediates induction of pluripotency downstream of LIF/Stat3 and Wnt/beta-catenin signaling. Required for normal duct development in the salivary gland and kidney. Coordinates the development of the kidney collecting ducts intercalated (IC) and principal (PC) cells, which regulate acid-base and salt-water homeostasis, respectively. Regulates the expression of IC genes including subunits B1 and D2 of the V-ATPase complex, Oxgr1, Ca12, Slc4a1, Aqp6 and IC-specific transcription factor Foxi1. Also regulates the expression of Jag1 and subsequent notch signaling in the collecting duct. Jag1 initiates notch signaling in PCs but inhibits notch signaling in ICs. Acts as a transcriptional suppressor that may suppress UBP1-mediated transcriptional activation. Modulates the placental expression of CYP11A1. This chain is Transcription factor CP2-like protein 1 (Tfcp2l1), found in Mus musculus (Mouse).